A 232-amino-acid chain; its full sequence is Orotate phosphoribosyltransferase (232 aa).

5-phospho-alpha-D-ribose 1-diphosphate contacts are provided by residues Arg-107, Lys-108, Lys-111, and 133 to 141 (EDLTTDGGS). Thr-137 provides a ligand contact to orotate.

The protein belongs to the purine/pyrimidine phosphoribosyltransferase family. PyrE subfamily. In terms of assembly, homodimer. The cofactor is Mg(2+).

The catalysed reaction is orotidine 5'-phosphate + diphosphate = orotate + 5-phospho-alpha-D-ribose 1-diphosphate. Its pathway is pyrimidine metabolism; UMP biosynthesis via de novo pathway; UMP from orotate: step 1/2. In terms of biological role, catalyzes the transfer of a ribosyl phosphate group from 5-phosphoribose 1-diphosphate to orotate, leading to the formation of orotidine monophosphate (OMP). This Cereibacter sphaeroides (strain KD131 / KCTC 12085) (Rhodobacter sphaeroides) protein is Orotate phosphoribosyltransferase.